We begin with the raw amino-acid sequence, 139 residues long: Small ribosomal subunit protein uS12 (139 aa).

Belongs to the universal ribosomal protein uS12 family. Part of the 30S ribosomal subunit. Contacts proteins S8 and S17. May interact with IF1 in the 30S initiation complex.

With S4 and S5 plays an important role in translational accuracy. Functionally, interacts with and stabilizes bases of the 16S rRNA that are involved in tRNA selection in the A site and with the mRNA backbone. Located at the interface of the 30S and 50S subunits, it traverses the body of the 30S subunit contacting proteins on the other side and probably holding the rRNA structure together. The combined cluster of proteins S8, S12 and S17 appears to hold together the shoulder and platform of the 30S subunit. The sequence is that of Small ribosomal subunit protein uS12 from Mycoplasma pneumoniae (strain ATCC 29342 / M129 / Subtype 1) (Mycoplasmoides pneumoniae).